Consider the following 84-residue polypeptide: MRSSSKKKIDISNHELVPKHEILQLEEAYKLVKELGIKPEQLPWIRASDPVAKSIGAKPGDIIKITRKSPFTGESVTYRYVITG.

This sequence belongs to the archaeal Rpo5/eukaryotic RPB5 RNA polymerase subunit family. Part of the 13-subunit RNA polymerase.

The protein localises to the cytoplasm. The enzyme catalyses RNA(n) + a ribonucleoside 5'-triphosphate = RNA(n+1) + diphosphate. DNA-dependent RNA polymerase (RNAP) catalyzes the transcription of DNA into RNA using the four ribonucleoside triphosphates as substrates. Functionally, reconstitution experiments show this subunit is required for basic activity. This is DNA-directed RNA polymerase subunit Rpo5 from Sulfolobus acidocaldarius (strain ATCC 33909 / DSM 639 / JCM 8929 / NBRC 15157 / NCIMB 11770).